We begin with the raw amino-acid sequence, 1549 residues long: Trichohyalin (1549 aa).

Positions 1-91 (MSPLLRSIFN…AAACYYALGQ (91 aa)) are S-100-like. EF-hand domains lie at 23 to 48 (CDGT…LRKP) and 49 to 84 (HDPE…VAAA). 6 residues coordinate Ca(2+): T27, D32, D62, D64, D66, and E73. 4 disordered regions span residues 97–125 (EKEA…PQDR), 157–180 (LQRR…GREL), 262–359 (LRRK…KQEQ), and 404–448 (QREK…RQER). 3 stretches are compositionally biased toward basic and acidic residues: residues 171 to 180 (LQQRPKGREL), 262 to 278 (LRRK…RQEQ), and 317 to 335 (HRQE…ERQQ). A compositionally biased stretch (low complexity) spans 336–348 (EQQISEEVQSLQE). Residues 349-359 (DQGRQRLKQEQ) are compositionally biased toward basic and acidic residues. 14 consecutive repeat copies span residues 413–448 (ERQY…RQER), 449–476 (EKQY…RQER), 477–504 (EKQY…RQER), 505–532 (ERQY…RQER), 533–560 (ERQY…RQER), 561–588 (EKQY…RQER), 589–616 (EKQY…RQER), 617–644 (ERQY…RQER), 645–678 (ERQY…RQER), 679–706 (ERQY…RQER), 707–742 (ERQY…RQVR), 743–771 (ERKY…DREK), 772–796 (RQYL…RQER), and 797–832 (ERQY…RQEL). Residues 413 to 832 (ERQYREVELQ…ECEKRRRQEL (420 aa)) form a 14 X 28 AA approximate tandem repeats region. Disordered regions lie at residues 782-803 (REEE…YREE), 839-942 (EELQ…RKFR), and 980-1000 (QLRQ…ERDR). Basic and acidic residues-rich tracts occupy residues 850–884 (FRDD…DSWV), 895–918 (PLQD…KRDS), and 925–942 (LLER…RKFR). Tandem repeats lie at residues 938-961 (DRKF…YLEE), 962-985 (DRKF…RQER), 986-1021 (DRKF…RQER), 1022-1044 (DRKF…RQER), 1045-1067 (DRKF…RQER), 1068-1090 (DRKF…LRQE), 1091-1121 (RNRK…RQKR), 1122-1144 (DRKF…RQER), 1145-1167 (DRKF…RQER), 1168-1197 (DRKF…RQER), 1198-1227 (DRKF…RQER), 1228-1250 (DRKF…RQER), 1251-1273 (DRKF…RQER), 1274-1296 (DRKF…RQER), 1297-1319 (DRKF…RQER), 1320-1342 (DRKF…RQER), 1343-1368 (DRKF…ELEG), 1369-1391 (VFSQ…QRQR), 1392-1416 (DRKF…VQEQ), 1417-1439 (DRKF…RRRQ), 1440-1461 (QLDQ…RRQE), 1462-1484 (QELR…EEEQ), and 1485-1507 (LRRQ…SRRQ). The 23 X 23 AA approximate tandem repeats stretch occupies residues 938-1507 (DRKFREEEQL…ERDVQQSRRQ (570 aa)). A compositionally biased stretch (basic and acidic residues) spans 1489-1523 (QQEEQKRRQERDVQQSRRQVWEEDKGRRQVLEAGK). The interval 1489-1549 (QQEEQKRRQE…IQEQRSQYRP (61 aa)) is disordered.

It belongs to the S100-fused protein family. In terms of assembly, homodimer. Post-translationally, substrate of transglutaminase. Some 200 arginines are probably converted to citrullines by peptidylarginine deimidase. As to expression, found in the hard keratinizing tissues such as the inner root sheath (IRS) of hair follicles and medulla, and in the epithelia of the tongue, hoof and rumen.

Functionally, intermediate filament-associated protein that associates in regular arrays with keratin intermediate filaments (KIF) of the inner root sheath cells of the hair follicle and the granular layer of the epidermis. It later becomes cross-linked to KIF by isodipeptide bonds. It may serve as scaffold protein, together with involucrin, in the organization of the cell envelope or even anchor the cell envelope to the KIF network. It may be involved in its own calcium-dependent postsynthetic processing during terminal differentiation. The protein is Trichohyalin (TCHH) of Ovis aries (Sheep).